The sequence spans 73 residues: MPKKDGVIEIEGTVIEALPNAMFRVELSNGHKVLAHISGKMRQHYIRILPEDRVVVELSPYDLSRGRIVYRYK.

The 73-residue stretch at 1–73 folds into the S1-like domain; the sequence is MPKKDGVIEI…SRGRIVYRYK (73 aa).

It belongs to the IF-1 family. As to quaternary structure, component of the 30S ribosomal translation pre-initiation complex which assembles on the 30S ribosome in the order IF-2 and IF-3, IF-1 and N-formylmethionyl-tRNA(fMet); mRNA recruitment can occur at any time during PIC assembly.

The protein resides in the cytoplasm. One of the essential components for the initiation of protein synthesis. Stabilizes the binding of IF-2 and IF-3 on the 30S subunit to which N-formylmethionyl-tRNA(fMet) subsequently binds. Helps modulate mRNA selection, yielding the 30S pre-initiation complex (PIC). Upon addition of the 50S ribosomal subunit IF-1, IF-2 and IF-3 are released leaving the mature 70S translation initiation complex. This chain is Translation initiation factor IF-1, found in Kineococcus radiotolerans (strain ATCC BAA-149 / DSM 14245 / SRS30216).